Reading from the N-terminus, the 313-residue chain is 3-O-acetylpapaveroxine carboxylesterase CXE2 (313 aa).

Residues histidine 72 to glycine 74 carry the Involved in the stabilization of the negatively charged intermediate by the formation of the oxyanion hole motif. Active-site residues include serine 158, aspartate 262, and histidine 292.

The protein belongs to the 'GDXG' lipolytic enzyme family.

It carries out the reaction 3-O-acetylpapaveroxine + H2O = narcotine hemiacetal + acetate + H(+). It functions in the pathway alkaloid biosynthesis. Its function is as follows. Carboxylesterase involved in the biosynthesis of the benzylisoquinoline alkaloid noscapine. Converts 3-O-acetylpapaveroxine to narcotine hemiacetal. The polypeptide is 3-O-acetylpapaveroxine carboxylesterase CXE2 (Papaver somniferum (Opium poppy)).